Here is an 861-residue protein sequence, read N- to C-terminus: Probable beta-glucosidase A (861 aa).

The N-terminal stretch at 1 to 19 (MKLGWIEVAALAAASVVSA) is a signal peptide. N-linked (GlcNAc...) asparagine glycosylation is found at asparagine 62, asparagine 212, and asparagine 253. The active site involves aspartate 281. Residues asparagine 316, asparagine 323, asparagine 355, asparagine 443, asparagine 524, asparagine 543, asparagine 565, asparagine 669, and asparagine 713 are each glycosylated (N-linked (GlcNAc...) asparagine). The tract at residues 730–754 (DSKYIPEGATDGSAQPRLPASGGAG) is disordered. N-linked (GlcNAc...) asparagine glycosylation occurs at asparagine 846.

This sequence belongs to the glycosyl hydrolase 3 family.

The protein resides in the secreted. It carries out the reaction Hydrolysis of terminal, non-reducing beta-D-glucosyl residues with release of beta-D-glucose.. Its pathway is glycan metabolism; cellulose degradation. In terms of biological role, beta-glucosidases are one of a number of cellulolytic enzymes involved in the degradation of cellulosic biomass. Catalyzes the last step releasing glucose from the inhibitory cellobiose. This is Probable beta-glucosidase A (bglA) from Aspergillus oryzae (strain ATCC 42149 / RIB 40) (Yellow koji mold).